The primary structure comprises 613 residues: ATP-dependent zinc metalloprotease FtsH (613 aa).

The Cytoplasmic segment spans residues 1–4 (MVKN). Residues 5 to 25 (LIFWLVITVVLMSVFQNFNSS) traverse the membrane as a helical segment. Over 26-98 (DTSNHRVDYS…VGEIPEEPSL (73 aa)) the chain is Extracellular. The helical transmembrane segment at 99–119 (LISIFISWFPMLLLIGVWIFF) threads the bilayer. At 120–613 (MRQMQMGGGK…WLEVDQKKDI (494 aa)) the chain is on the cytoplasmic side. 192-199 (GPPGTGKT) provides a ligand contact to ATP. Histidine 414 contributes to the Zn(2+) binding site. Residue glutamate 415 is part of the active site. Zn(2+)-binding residues include histidine 418 and aspartate 492.

This sequence in the central section; belongs to the AAA ATPase family. The protein in the C-terminal section; belongs to the peptidase M41 family. In terms of assembly, homohexamer. It depends on Zn(2+) as a cofactor.

The protein resides in the cell membrane. Functionally, acts as a processive, ATP-dependent zinc metallopeptidase for both cytoplasmic and membrane proteins. Plays a role in the quality control of integral membrane proteins. This is ATP-dependent zinc metalloprotease FtsH from Buchnera aphidicola subsp. Schizaphis graminum (strain Sg).